Consider the following 402-residue polypeptide: Flavohemoprotein (402 aa).

In terms of domain architecture, Globin spans 1–136 (MLSAKTIEIV…IADAFISIEA (136 aa)). His85 contributes to the heme b binding site. Catalysis depends on charge relay system residues Tyr95 and Glu135. The interval 147–402 (GGWKDFRNFV…EFFGPATSLQ (256 aa)) is reductase. Residues 150–260 (KDFRNFVIVK…SAPAGDFVLN (111 aa)) enclose the FAD-binding FR-type domain. FAD is bound by residues Tyr188 and 204-207 (RQYS). 273-278 (GVGITP) provides a ligand contact to NADP(+). 394–397 (FFGP) is an FAD binding site.

Belongs to the globin family. Two-domain flavohemoproteins subfamily. The protein in the C-terminal section; belongs to the flavoprotein pyridine nucleotide cytochrome reductase family. Requires heme b as cofactor. FAD is required as a cofactor.

It carries out the reaction 2 nitric oxide + NADPH + 2 O2 = 2 nitrate + NADP(+) + H(+). The catalysed reaction is 2 nitric oxide + NADH + 2 O2 = 2 nitrate + NAD(+) + H(+). Its function is as follows. Is involved in NO detoxification in an aerobic process, termed nitric oxide dioxygenase (NOD) reaction that utilizes O(2) and NAD(P)H to convert NO to nitrate, which protects the bacterium from various noxious nitrogen compounds. Therefore, plays a central role in the inducible response to nitrosative stress. The protein is Flavohemoprotein of Bacillus cereus (strain ATCC 14579 / DSM 31 / CCUG 7414 / JCM 2152 / NBRC 15305 / NCIMB 9373 / NCTC 2599 / NRRL B-3711).